Here is a 211-residue protein sequence, read N- to C-terminus: Protein-methionine-sulfoxide reductase heme-binding subunit MsrQ (211 aa).

6 consecutive transmembrane segments (helical) span residues 8-28, 54-74, 82-102, 116-136, 153-173, and 178-198; these read VIWL…WLVW, FLLA…PLLI, LWCF…ELGV, PYLT…FTST, FVYL…KIIS, and IYAG…LSLF.

It belongs to the MsrQ family. In terms of assembly, heterodimer of a catalytic subunit (MsrP) and a heme-binding subunit (MsrQ). The cofactor is FMN. Heme b is required as a cofactor.

Its subcellular location is the cell inner membrane. Functionally, part of the MsrPQ system that repairs oxidized periplasmic proteins containing methionine sulfoxide residues (Met-O), using respiratory chain electrons. Thus protects these proteins from oxidative-stress damage caused by reactive species of oxygen and chlorine generated by the host defense mechanisms. MsrPQ is essential for the maintenance of envelope integrity under bleach stress, rescuing a wide series of structurally unrelated periplasmic proteins from methionine oxidation, including the primary periplasmic chaperone SurA and the lipoprotein Pal. MsrQ provides electrons for reduction to the reductase catalytic subunit MsrP, using the quinone pool of the respiratory chain. In Shigella flexneri, this protein is Protein-methionine-sulfoxide reductase heme-binding subunit MsrQ.